The sequence spans 101 residues: Small ribosomal subunit protein uS14 (101 aa).

The protein belongs to the universal ribosomal protein uS14 family. Part of the 30S ribosomal subunit. Contacts proteins S3 and S10.

Functionally, binds 16S rRNA, required for the assembly of 30S particles and may also be responsible for determining the conformation of the 16S rRNA at the A site. This Brucella abortus (strain 2308) protein is Small ribosomal subunit protein uS14.